Here is a 236-residue protein sequence, read N- to C-terminus: Alpha-tubulin N-acetyltransferase (236 aa).

In terms of domain architecture, N-acetyltransferase spans 21–201 (ASVPDGVSRW…NKFVVFHGFF (181 aa)). Acetyl-CoA-binding positions include 134–147 (FYVDESCQRQGYGK) and 171–180 (SDKLLGFMKK). The segment at 217-236 (SPTGAAAAATGTKAKNEMPG) is disordered. Residues 219–229 (TGAAAAATGTK) show a composition bias toward low complexity.

Belongs to the acetyltransferase ATAT1 family.

It carries out the reaction L-lysyl-[alpha-tubulin] + acetyl-CoA = N(6)-acetyl-L-lysyl-[alpha-tubulin] + CoA + H(+). In terms of biological role, specifically acetylates 'Lys-40' in alpha-tubulin on the lumenal side of microtubules. Promotes microtubule destabilization and accelerates microtubule dynamics; this activity may be independent of acetylation activity. Acetylates alpha-tubulin with a slow enzymatic rate, due to a catalytic site that is not optimized for acetyl transfer. Enters the microtubule through each end and diffuses quickly throughout the lumen of microtubules. Acetylates only long/old microtubules because of its slow acetylation rate since it does not have time to act on dynamically unstable microtubules before the enzyme is released. In Leishmania braziliensis, this protein is Alpha-tubulin N-acetyltransferase.